We begin with the raw amino-acid sequence, 199 residues long: Dephospho-CoA kinase (199 aa).

A DPCK domain is found at 3–199 (VIGLTGSIGM…AAAKMPRRRS (197 aa)). ATP is bound at residue 11 to 16 (GMGKST).

The protein belongs to the CoaE family.

Its subcellular location is the cytoplasm. It catalyses the reaction 3'-dephospho-CoA + ATP = ADP + CoA + H(+). It functions in the pathway cofactor biosynthesis; coenzyme A biosynthesis; CoA from (R)-pantothenate: step 5/5. Its function is as follows. Catalyzes the phosphorylation of the 3'-hydroxyl group of dephosphocoenzyme A to form coenzyme A. The sequence is that of Dephospho-CoA kinase from Nitrobacter winogradskyi (strain ATCC 25391 / DSM 10237 / CIP 104748 / NCIMB 11846 / Nb-255).